A 408-amino-acid polypeptide reads, in one-letter code: 2-acyl-4-prenylphloroglucinol 6-prenyltransferase, chloroplastic (408 aa).

The transit peptide at 1–46 directs the protein to the chloroplast; sequence MELSSACNLSLKPNYYYYPTSLFPSNNSYNNLKASSYYQTQRPIKC. The next 9 helical transmembrane spans lie at 119–139, 146–166, 193–213, 217–237, 257–277, 281–301, 326–346, 355–375, and 388–408; these read PIPF…ELLK, WQLM…HIYI, SVKS…LLMI, CGLF…MYSV, IGIG…GLPF, PPFT…SILK, IVLV…GVAI, YIMI…TWLL, and YYHF…FIST.

The protein belongs to the UbiA prenyltransferase family. In terms of assembly, homo- and heteromer. Interacts with PT1L, forming a functional metabolon. It depends on Mg(2+) as a cofactor. In terms of tissue distribution, expressed in trichomes.

It localises to the plastid. Its subcellular location is the chloroplast membrane. The catalysed reaction is a 2-acyl-4-prenylphloroglucinol + dimethylallyl diphosphate = a 2-acyl-4,6-diprenylphloroglucinol + diphosphate. It carries out the reaction a 2-acyl-4,6-diprenylphloroglucinol + dimethylallyl diphosphate = a 2-acyl-4,6,6-triprenylphloroglucinol + diphosphate. Its pathway is secondary metabolite biosynthesis. In terms of biological role, involved in the biosynthesis of prenylated phenolics natural products which contribute to the bitter taste of beer and display broad biological activities. Catalyzes the two last prenylation steps in the beta-bitter acid pathway. Uses dimethylallyl diphosphate (DMAPP) as the prenyl donor. This chain is 2-acyl-4-prenylphloroglucinol 6-prenyltransferase, chloroplastic, found in Humulus lupulus (European hop).